Consider the following 162-residue polypeptide: Protein-export protein SecB (162 aa).

Belongs to the SecB family. Homotetramer, a dimer of dimers. One homotetramer interacts with 1 SecA dimer.

It is found in the cytoplasm. One of the proteins required for the normal export of preproteins out of the cell cytoplasm. It is a molecular chaperone that binds to a subset of precursor proteins, maintaining them in a translocation-competent state. It also specifically binds to its receptor SecA. This Hamiltonella defensa subsp. Acyrthosiphon pisum (strain 5AT) protein is Protein-export protein SecB.